Reading from the N-terminus, the 87-residue chain is Small ribosomal subunit protein bS20 (87 aa).

Residues 67-87 (HKNNGSRKASRLDAYVQSKQQ) form a disordered region.

This sequence belongs to the bacterial ribosomal protein bS20 family.

Its function is as follows. Binds directly to 16S ribosomal RNA. This Metamycoplasma arthritidis (strain 158L3-1) (Mycoplasma arthritidis) protein is Small ribosomal subunit protein bS20.